Reading from the N-terminus, the 404-residue chain is Probable homogentisate phytyltransferase 1, chloroplastic (404 aa).

Residues 1–77 (MDSLRLRPSL…SHHRIPHRPT (77 aa)) constitute a chloroplast transit peptide. The interval 68–96 (SHHRIPHRPTSSSADASGQPLQSSAEAHD) is disordered. Over residues 76 to 92 (PTSSSADASGQPLQSSA) the composition is skewed to polar residues. A run of 9 helical transmembrane segments spans residues 119 to 139 (TVIG…ENLS), 144 to 164 (LFLT…IYIV), 184 to 204 (LASG…FAAM), 216 to 238 (PLFL…LPFL), 245 to 265 (VVAA…AFFL), 282 to 302 (LIFA…FKDI), 325 to 345 (VFWI…LMGA), 348 to 368 (ACLW…AILW), and 382 to 402 (ITSF…LIPL).

It belongs to the UbiA prenyltransferase family.

It is found in the plastid. The protein localises to the chloroplast thylakoid membrane. The catalysed reaction is phytyl diphosphate + homogentisate + H(+) = 2-methyl-6-phytyl-1,4-benzene-1,4-diol + CO2 + diphosphate. It functions in the pathway cofactor biosynthesis; tocopherol biosynthesis. Its function is as follows. Involved in the synthesis of tocopherol (vitamin E). Catalyzes the condensation of homogentisate and phytyl diphosphate to form dimethylphytylhydroquinone. This is Probable homogentisate phytyltransferase 1, chloroplastic (HPT1) from Oryza sativa subsp. japonica (Rice).